We begin with the raw amino-acid sequence, 520 residues long: 2-isopropylmalate synthase (520 aa).

The 263-residue stretch at 5–267 folds into the Pyruvate carboxyltransferase domain; that stretch reads VIIFDTTLRD…YTNINHQEIY (263 aa). Mn(2+) contacts are provided by D14, H202, H204, and N238. The tract at residues 392–520 is regulatory domain; the sequence is HLDNFNIQSG…RIQQNTKEMV (129 aa).

This sequence belongs to the alpha-IPM synthase/homocitrate synthase family. LeuA type 1 subfamily. In terms of assembly, homodimer. The cofactor is Mn(2+).

It is found in the cytoplasm. The enzyme catalyses 3-methyl-2-oxobutanoate + acetyl-CoA + H2O = (2S)-2-isopropylmalate + CoA + H(+). Its pathway is amino-acid biosynthesis; L-leucine biosynthesis; L-leucine from 3-methyl-2-oxobutanoate: step 1/4. Catalyzes the condensation of the acetyl group of acetyl-CoA with 3-methyl-2-oxobutanoate (2-ketoisovalerate) to form 3-carboxy-3-hydroxy-4-methylpentanoate (2-isopropylmalate). This Photorhabdus laumondii subsp. laumondii (strain DSM 15139 / CIP 105565 / TT01) (Photorhabdus luminescens subsp. laumondii) protein is 2-isopropylmalate synthase.